A 261-amino-acid chain; its full sequence is Cytochrome c oxidase subunit 3 (261 aa).

At 1–15 (MAHQAHSYHMVDPSP) the chain is on the mitochondrial matrix side. A helical membrane pass occupies residues 16–34 (WPIFGAITALLTTSGLIMW). Over 35 to 40 (FHYNSI) the chain is Mitochondrial intermembrane. Residues 41–66 (ALLTAGLLSMLLVMIQWWRDVVREST) form a helical membrane-spanning segment. The Mitochondrial matrix portion of the chain corresponds to 67-72 (FQGHHT). Residues 73 to 105 (PTVQKGLRYGMILFITSEAFFFLGFFWAFFHSS) traverse the membrane as a helical segment. The Mitochondrial intermembrane portion of the chain corresponds to 106-128 (LAPTPELGGQWPPTGIKPLNPLE). A helical transmembrane segment spans residues 129-152 (VPLLNTAILLASGVTVTWAHHSIT). Over 153-155 (EGN) the chain is Mitochondrial matrix. A helical membrane pass occupies residues 156 to 183 (RKQAIHALTLTILLGFYFTALQAMEYHE). The Mitochondrial intermembrane segment spans residues 184–190 (ASFSIAD). Residues 191–223 (SVYGSTFFVATGFHGLHVIIGSSFLTICLLRLI) form a helical membrane-spanning segment. Residues 224–232 (KFHFTSNHH) are Mitochondrial matrix-facing. Residues 233–256 (FGFEAAAWYWHFVDIIWLFLYMSM) traverse the membrane as a helical segment. Topologically, residues 257–261 (YWWGS) are mitochondrial intermembrane.

Belongs to the cytochrome c oxidase subunit 3 family. Component of the cytochrome c oxidase (complex IV, CIV), a multisubunit enzyme composed of 14 subunits. The complex is composed of a catalytic core of 3 subunits MT-CO1, MT-CO2 and MT-CO3, encoded in the mitochondrial DNA, and 11 supernumerary subunits COX4I, COX5A, COX5B, COX6A, COX6B, COX6C, COX7A, COX7B, COX7C, COX8 and NDUFA4, which are encoded in the nuclear genome. The complex exists as a monomer or a dimer and forms supercomplexes (SCs) in the inner mitochondrial membrane with NADH-ubiquinone oxidoreductase (complex I, CI) and ubiquinol-cytochrome c oxidoreductase (cytochrome b-c1 complex, complex III, CIII), resulting in different assemblies (supercomplex SCI(1)III(2)IV(1) and megacomplex MCI(2)III(2)IV(2)).

It is found in the mitochondrion inner membrane. It carries out the reaction 4 Fe(II)-[cytochrome c] + O2 + 8 H(+)(in) = 4 Fe(III)-[cytochrome c] + 2 H2O + 4 H(+)(out). In terms of biological role, component of the cytochrome c oxidase, the last enzyme in the mitochondrial electron transport chain which drives oxidative phosphorylation. The respiratory chain contains 3 multisubunit complexes succinate dehydrogenase (complex II, CII), ubiquinol-cytochrome c oxidoreductase (cytochrome b-c1 complex, complex III, CIII) and cytochrome c oxidase (complex IV, CIV), that cooperate to transfer electrons derived from NADH and succinate to molecular oxygen, creating an electrochemical gradient over the inner membrane that drives transmembrane transport and the ATP synthase. Cytochrome c oxidase is the component of the respiratory chain that catalyzes the reduction of oxygen to water. Electrons originating from reduced cytochrome c in the intermembrane space (IMS) are transferred via the dinuclear copper A center (CU(A)) of subunit 2 and heme A of subunit 1 to the active site in subunit 1, a binuclear center (BNC) formed by heme A3 and copper B (CU(B)). The BNC reduces molecular oxygen to 2 water molecules using 4 electrons from cytochrome c in the IMS and 4 protons from the mitochondrial matrix. This is Cytochrome c oxidase subunit 3 (MT-CO3) from Coturnix japonica (Japanese quail).